The primary structure comprises 473 residues: Photosystem II CP43 reaction center protein (473 aa).

Positions 1–14 are excised as a propeptide; sequence MKTLYSLRRFYPVE. Residue T15 is modified to N-acetylthreonine. A Phosphothreonine modification is found at T15. 5 helical membrane-spanning segments follow: residues 69-93, 134-155, 178-200, 255-275, and 291-312; these read LFEV…PHLA, LLGP…KDRN, KALY…RKIT, KPFA…LSYS, and WFNN…ASQA. E367 provides a ligand contact to [CaMn4O5] cluster. A helical transmembrane segment spans residues 447–471; that stretch reads RARAAAAGFEKGIDRDLEPVLSMTP.

Belongs to the PsbB/PsbC family. PsbC subfamily. As to quaternary structure, PSII is composed of 1 copy each of membrane proteins PsbA, PsbB, PsbC, PsbD, PsbE, PsbF, PsbH, PsbI, PsbJ, PsbK, PsbL, PsbM, PsbT, PsbX, PsbY, PsbZ, Psb30/Ycf12, at least 3 peripheral proteins of the oxygen-evolving complex and a large number of cofactors. It forms dimeric complexes. The cofactor is Binds multiple chlorophylls and provides some of the ligands for the Ca-4Mn-5O cluster of the oxygen-evolving complex. It may also provide a ligand for a Cl- that is required for oxygen evolution. PSII binds additional chlorophylls, carotenoids and specific lipids..

The protein resides in the plastid. The protein localises to the chloroplast thylakoid membrane. Its function is as follows. One of the components of the core complex of photosystem II (PSII). It binds chlorophyll and helps catalyze the primary light-induced photochemical processes of PSII. PSII is a light-driven water:plastoquinone oxidoreductase, using light energy to abstract electrons from H(2)O, generating O(2) and a proton gradient subsequently used for ATP formation. In Phalaenopsis aphrodite subsp. formosana (Moth orchid), this protein is Photosystem II CP43 reaction center protein.